The following is a 701-amino-acid chain: MNPVIKTFQFGQSTVTLETGRIARQATGAVLVTVDNDVTVLVTVVGAKQADPGKGFFPLSVHYQEKTYAAGKIPGGFFKREGRPSEKETLTSRLIDRPIRPLFPEGFMNEVQVVCTVVSTSKKTDPDIAAMIGTSAALAISGIPFEGPIGAARVAFHESTGYLLNPTYEQLAASSLDMVVAGTSDAVLMVESEAQELTEDQMLGAVLFAHDEFQAVIQAVKELAAEAGKPTWDWKPAVANTELFNAIRAEFGEAVSQGYTITVKADRYARLGELRDQAVAKFSGEEGQPSASEVKEIFGEIEYRTVRENIVNGKPRIDGRDNKTVRPLNIEVGVLPKTHGSALFTRGETQALVVATLGTARDAQLLDTLEGEKKDPFMLHYNFPPFSVGECGRMGGAGRREIGHGRLARRSVQAMLPAADVFPYTIRVVSEITESNGSSSMASVCGASLALMDAGVPMKAPVAGIAMGLVKEGDKFAVLTDILGDEDHLGDMDFKVAGTAKGVTALQMDIKINGITEEIMEIALGQALEARLNILGQMNQVIGQSRTELSANAPTMIAMKIDTDKIRDVIGKGGATIRAICEETKASIDIEDDGSIKIFGETKEAADAAKQRILGITAEAEIGKIYVGKVERIVDFGAFVNILPGKDGLVHISMLSDARVEKVTDILKEGQEVEVLVLDVDNRGRIKLSIKDVAAAKASGV.

Aspartate 487 and aspartate 493 together coordinate Mg(2+). The 60-residue stretch at 554-613 (PTMIAMKIDTDKIRDVIGKGGATIRAICEETKASIDIEDDGSIKIFGETKEAADAAKQRI) folds into the KH domain. Residues 623–691 (GKIYVGKVER…NRGRIKLSIK (69 aa)) form the S1 motif domain.

The protein belongs to the polyribonucleotide nucleotidyltransferase family. Component of the RNA degradosome, which is a multiprotein complex involved in RNA processing and mRNA degradation. It depends on Mg(2+) as a cofactor.

The protein localises to the cytoplasm. The catalysed reaction is RNA(n+1) + phosphate = RNA(n) + a ribonucleoside 5'-diphosphate. Involved in mRNA degradation. Catalyzes the phosphorolysis of single-stranded polyribonucleotides processively in the 3'- to 5'-direction. The chain is Polyribonucleotide nucleotidyltransferase from Pseudomonas putida (Arthrobacter siderocapsulatus).